A 31-amino-acid chain; its full sequence is Cytochrome b6-f complex subunit 6 (31 aa).

Residues 4-26 (LTSYFGFLLAALTITSALFIGLS) traverse the membrane as a helical segment.

This sequence belongs to the PetL family. As to quaternary structure, the 4 large subunits of the cytochrome b6-f complex are cytochrome b6, subunit IV (17 kDa polypeptide, PetD), cytochrome f and the Rieske protein, while the 4 small subunits are PetG, PetL, PetM and PetN. The complex functions as a dimer.

It localises to the plastid. The protein resides in the chloroplast thylakoid membrane. Component of the cytochrome b6-f complex, which mediates electron transfer between photosystem II (PSII) and photosystem I (PSI), cyclic electron flow around PSI, and state transitions. PetL is important for photoautotrophic growth as well as for electron transfer efficiency and stability of the cytochrome b6-f complex. This chain is Cytochrome b6-f complex subunit 6, found in Aethionema cordifolium (Lebanon stonecress).